The following is a 271-amino-acid chain: Type III pantothenate kinase (271 aa).

An ATP-binding site is contributed by 6 to 13 (DVRNTHTV). 109–112 (GADR) lines the substrate pocket. Residue Asp-111 is the Proton acceptor of the active site. A K(+)-binding site is contributed by Asp-131. Ser-134 contacts ATP. Thr-186 serves as a coordination point for substrate.

It belongs to the type III pantothenate kinase family. As to quaternary structure, homodimer. Requires NH4(+) as cofactor. The cofactor is K(+).

Its subcellular location is the cytoplasm. The catalysed reaction is (R)-pantothenate + ATP = (R)-4'-phosphopantothenate + ADP + H(+). Its pathway is cofactor biosynthesis; coenzyme A biosynthesis; CoA from (R)-pantothenate: step 1/5. Functionally, catalyzes the phosphorylation of pantothenate (Pan), the first step in CoA biosynthesis. This chain is Type III pantothenate kinase, found in Mycolicibacterium vanbaalenii (strain DSM 7251 / JCM 13017 / BCRC 16820 / KCTC 9966 / NRRL B-24157 / PYR-1) (Mycobacterium vanbaalenii).